A 528-amino-acid polypeptide reads, in one-letter code: Phosphoenolpyruvate carboxykinase (ATP) (528 aa).

Residues Arg-56, Tyr-192, and Lys-198 each contribute to the substrate site. ATP-binding positions include Lys-198, His-217, and 233-241 (GLSGTGKTT). Positions 198 and 217 each coordinate Mn(2+). Mn(2+) is bound at residue Asp-254. ATP contacts are provided by Glu-282, Arg-319, and Thr-444. Arg-319 lines the substrate pocket.

Belongs to the phosphoenolpyruvate carboxykinase (ATP) family. It depends on Mn(2+) as a cofactor.

Its subcellular location is the cytoplasm. It catalyses the reaction oxaloacetate + ATP = phosphoenolpyruvate + ADP + CO2. It functions in the pathway carbohydrate biosynthesis; gluconeogenesis. Its function is as follows. Involved in the gluconeogenesis. Catalyzes the conversion of oxaloacetate (OAA) to phosphoenolpyruvate (PEP) through direct phosphoryl transfer between the nucleoside triphosphate and OAA. The protein is Phosphoenolpyruvate carboxykinase (ATP) of Bacillus cereus (strain B4264).